Here is a 237-residue protein sequence, read N- to C-terminus: Phosphoribosylaminoimidazole-succinocarboxamide synthase (237 aa).

Belongs to the SAICAR synthetase family.

It catalyses the reaction 5-amino-1-(5-phospho-D-ribosyl)imidazole-4-carboxylate + L-aspartate + ATP = (2S)-2-[5-amino-1-(5-phospho-beta-D-ribosyl)imidazole-4-carboxamido]succinate + ADP + phosphate + 2 H(+). It functions in the pathway purine metabolism; IMP biosynthesis via de novo pathway; 5-amino-1-(5-phospho-D-ribosyl)imidazole-4-carboxamide from 5-amino-1-(5-phospho-D-ribosyl)imidazole-4-carboxylate: step 1/2. This chain is Phosphoribosylaminoimidazole-succinocarboxamide synthase, found in Psychrobacter arcticus (strain DSM 17307 / VKM B-2377 / 273-4).